Here is a 297-residue protein sequence, read N- to C-terminus: Large ribosomal subunit protein uL18 (297 aa).

This sequence belongs to the universal ribosomal protein uL18 family. As to quaternary structure, component of the large ribosomal subunit (LSU).

It is found in the cytoplasm. The protein resides in the nucleus. Functionally, component of the ribosome, a large ribonucleoprotein complex responsible for the synthesis of proteins in the cell. The small ribosomal subunit (SSU) binds messenger RNAs (mRNAs) and translates the encoded message by selecting cognate aminoacyl-transfer RNA (tRNA) molecules. The large subunit (LSU) contains the ribosomal catalytic site termed the peptidyl transferase center (PTC), which catalyzes the formation of peptide bonds, thereby polymerizing the amino acids delivered by tRNAs into a polypeptide chain. The nascent polypeptides leave the ribosome through a tunnel in the LSU and interact with protein factors that function in enzymatic processing, targeting, and the membrane insertion of nascent chains at the exit of the ribosomal tunnel. The chain is Large ribosomal subunit protein uL18 (RpL5) from Lysiphlebus testaceipes (Greenbugs aphid parastoid).